A 92-amino-acid polypeptide reads, in one-letter code: Small ribosomal subunit protein uS19c (92 aa).

This sequence belongs to the universal ribosomal protein uS19 family.

It localises to the plastid. The protein resides in the chloroplast. Functionally, protein S19 forms a complex with S13 that binds strongly to the 16S ribosomal RNA. This Cycas taitungensis (Prince sago) protein is Small ribosomal subunit protein uS19c.